The chain runs to 186 residues: Histone deacetylase complex subunit SAP25 (186 aa).

Disordered stretches follow at residues 1–25 (MSPL…PSCG) and 148–186 (EQTP…GTDT). Polar residues-rich tracts occupy residues 148 to 163 (EQTP…STSC) and 177 to 186 (GDQSCSGTDT).

In terms of assembly, may be a component of the mSIN3A corepressor complex. Interacts with SIN3A and HDAC2. Widely expressed.

It localises to the nucleus. The protein resides in the cytoplasm. Functionally, involved in the transcriptional repression mediated by the mSIN3A but not the N-CoR corepressor complex. This Mus musculus (Mouse) protein is Histone deacetylase complex subunit SAP25 (Sap25).